Reading from the N-terminus, the 186-residue chain is MVGEIPVLLIMKKPIVVSGDVSVYDVAKLMVEQDVPCVLVVCERPNHESIEVATDKDIIKKVLIRKLPPDKVKVEDISSGKLVTIPPNTTIDEALEIMNKYKTNELFIVDDGKIVGVITEEDLIKIAPEIISTLKELVNYLLQIIDEVTSGDISDKSKEIQNINQGKDNKKDSESDIRKKKIMLIK.

CBS domains lie at 10–69 (IMKK…KLPP) and 77–133 (ISSG…IIST).

This is an uncharacterized protein from Methanocaldococcus jannaschii (strain ATCC 43067 / DSM 2661 / JAL-1 / JCM 10045 / NBRC 100440) (Methanococcus jannaschii).